The following is a 58-amino-acid chain: Mesomartoxin (58 aa).

Positions 1–29 (MMSRLSVFILIALVLSVIIDVLNNSKVEG) are cleaved as a signal peptide. Cystine bridges form between Cys-31–Cys-49, Cys-35–Cys-54, and Cys-39–Cys-56.

The protein belongs to the short scorpion toxin superfamily. Potassium channel inhibitor family. Alpha-KTx 26 subfamily. In terms of tissue distribution, expressed by the venom gland.

The protein resides in the secreted. In terms of biological role, recombinant toxin that reversibly blocks the voltage-gated potassium channels Shaker (IC(50)=0.054 nM), rKv1.2/KCNA2 (IC(50)=15.6 nM), and rKv1.3/KCNA3 (IC(50)=12.5 uM). The sequence is that of Mesomartoxin from Olivierus martensii (Manchurian scorpion).